Consider the following 319-residue polypeptide: Epoxyqueuosine reductase (319 aa).

Aspartate 146 (proton donor) is an active-site residue. The 33-residue stretch at 188–220 folds into the 4Fe-4S ferredoxin-type domain; that stretch reads ASLPADQPARSLCGHCQRCLPACPTAAITEPFV. [4Fe-4S] cluster-binding residues include cysteine 200, cysteine 203, cysteine 206, cysteine 210, cysteine 226, cysteine 250, cysteine 253, and cysteine 257.

The protein belongs to the QueG family. As to quaternary structure, monomer. Cob(II)alamin is required as a cofactor. Requires [4Fe-4S] cluster as cofactor.

It is found in the cytoplasm. The catalysed reaction is epoxyqueuosine(34) in tRNA + AH2 = queuosine(34) in tRNA + A + H2O. It participates in tRNA modification; tRNA-queuosine biosynthesis. Functionally, catalyzes the conversion of epoxyqueuosine (oQ) to queuosine (Q), which is a hypermodified base found in the wobble positions of tRNA(Asp), tRNA(Asn), tRNA(His) and tRNA(Tyr). This chain is Epoxyqueuosine reductase, found in Synechococcus sp. (strain RCC307).